A 174-amino-acid polypeptide reads, in one-letter code: Ribosome maturation factor RimM (174 aa).

Residues 96–169 (EPDTYYDHQL…ILEIDPPDGL (74 aa)) enclose the PRC barrel domain.

Belongs to the RimM family. Binds ribosomal protein uS19.

It is found in the cytoplasm. Its function is as follows. An accessory protein needed during the final step in the assembly of 30S ribosomal subunit, possibly for assembly of the head region. Essential for efficient processing of 16S rRNA. May be needed both before and after RbfA during the maturation of 16S rRNA. It has affinity for free ribosomal 30S subunits but not for 70S ribosomes. This is Ribosome maturation factor RimM from Mycobacterium marinum (strain ATCC BAA-535 / M).